Here is a 346-residue protein sequence, read N- to C-terminus: MLVLGIESSCDETGLALYDTQRGLLAHALHSQIAMHRDYGGVVPELASRDHIRRALPLLEEVMAQSGTRRDDIDAIAFTQGPGLAGALLVGASIANALALAWNKPTVGIHHLEGHLLSPLLVDAPPPFPFVALLVSGGHTQLMRVTDVGVYETLGETLDDAAGEAFDKTAKLIGLGYPGGPEVSKLAETGTPGAVVLPRPMLHSGDLDFSFSGLKTAVLTQMKKFEAAKFDGEALERAKADLARGFVDAAVDVLVAKSLAALKKTKLKRLVVAGGVGANRQLRAALSAAAAKRGFDVHYPDLALCTDNGAMIALAGALRLGRWPEQANADYAFTVKPRWDLASLAG.

2 residues coordinate Fe cation: His111 and His115. Residues 134-138 (LVSGG), Asp167, Gly180, and Asn279 each bind substrate. Asp307 contributes to the Fe cation binding site.

Belongs to the KAE1 / TsaD family. Requires Fe(2+) as cofactor.

The protein resides in the cytoplasm. The catalysed reaction is L-threonylcarbamoyladenylate + adenosine(37) in tRNA = N(6)-L-threonylcarbamoyladenosine(37) in tRNA + AMP + H(+). In terms of biological role, required for the formation of a threonylcarbamoyl group on adenosine at position 37 (t(6)A37) in tRNAs that read codons beginning with adenine. Is involved in the transfer of the threonylcarbamoyl moiety of threonylcarbamoyl-AMP (TC-AMP) to the N6 group of A37, together with TsaE and TsaB. TsaD likely plays a direct catalytic role in this reaction. This Burkholderia cenocepacia (strain ATCC BAA-245 / DSM 16553 / LMG 16656 / NCTC 13227 / J2315 / CF5610) (Burkholderia cepacia (strain J2315)) protein is tRNA N6-adenosine threonylcarbamoyltransferase.